The chain runs to 311 residues: Probable porphobilinogen deaminase (311 aa).

S-(dipyrrolylmethanemethyl)cysteine is present on Cys237. The tract at residues 270 to 289 is disordered; that stretch reads SKTGDKNNPKSLGQSAGEEL.

This sequence belongs to the HMBS family. Dipyrromethane is required as a cofactor.

It catalyses the reaction 4 porphobilinogen + H2O = hydroxymethylbilane + 4 NH4(+). It participates in porphyrin-containing compound metabolism; protoporphyrin-IX biosynthesis; coproporphyrinogen-III from 5-aminolevulinate: step 2/4. Functionally, tetrapolymerization of the monopyrrole PBG into the hydroxymethylbilane pre-uroporphyrinogen in several discrete steps. The polypeptide is Probable porphobilinogen deaminase (Nitrosopumilus maritimus (strain SCM1)).